Consider the following 408-residue polypeptide: Arginine biosynthesis bifunctional protein ArgJ (408 aa).

Substrate contacts are provided by Thr-162, Lys-188, Thr-199, Glu-280, Asn-403, and Ser-408. Catalysis depends on Thr-199, which acts as the Nucleophile.

It belongs to the ArgJ family. Heterotetramer of two alpha and two beta chains.

The protein localises to the cytoplasm. It catalyses the reaction N(2)-acetyl-L-ornithine + L-glutamate = N-acetyl-L-glutamate + L-ornithine. The enzyme catalyses L-glutamate + acetyl-CoA = N-acetyl-L-glutamate + CoA + H(+). Its pathway is amino-acid biosynthesis; L-arginine biosynthesis; L-ornithine and N-acetyl-L-glutamate from L-glutamate and N(2)-acetyl-L-ornithine (cyclic): step 1/1. It participates in amino-acid biosynthesis; L-arginine biosynthesis; N(2)-acetyl-L-ornithine from L-glutamate: step 1/4. Its function is as follows. Catalyzes two activities which are involved in the cyclic version of arginine biosynthesis: the synthesis of N-acetylglutamate from glutamate and acetyl-CoA as the acetyl donor, and of ornithine by transacetylation between N(2)-acetylornithine and glutamate. The chain is Arginine biosynthesis bifunctional protein ArgJ from Ruegeria pomeroyi (strain ATCC 700808 / DSM 15171 / DSS-3) (Silicibacter pomeroyi).